The primary structure comprises 225 residues: Urease accessory protein UreG (225 aa).

Residues 1-21 (MHLDHHHESAAAVSADARRPD) are disordered. Residue 33 to 40 (GPVGSGKT) coordinates GTP.

It belongs to the SIMIBI class G3E GTPase family. UreG subfamily. As to quaternary structure, homodimer. UreD, UreF and UreG form a complex that acts as a GTP-hydrolysis-dependent molecular chaperone, activating the urease apoprotein by helping to assemble the nickel containing metallocenter of UreC. The UreE protein probably delivers the nickel.

The protein resides in the cytoplasm. Facilitates the functional incorporation of the urease nickel metallocenter. This process requires GTP hydrolysis, probably effectuated by UreG. In Streptomyces coelicolor (strain ATCC BAA-471 / A3(2) / M145), this protein is Urease accessory protein UreG.